Consider the following 388-residue polypeptide: Ferrochelatase (388 aa).

Fe cation is bound by residues His196 and Glu277.

The protein belongs to the ferrochelatase family.

It is found in the cytoplasm. The catalysed reaction is heme b + 2 H(+) = protoporphyrin IX + Fe(2+). The protein operates within porphyrin-containing compound metabolism; protoheme biosynthesis; protoheme from protoporphyrin-IX: step 1/1. Catalyzes the ferrous insertion into protoporphyrin IX. The sequence is that of Ferrochelatase from Nostoc punctiforme (strain ATCC 29133 / PCC 73102).